An 885-amino-acid chain; its full sequence is Alanine--tRNA ligase (885 aa).

4 residues coordinate Zn(2+): H564, H568, C676, and H680.

The protein belongs to the class-II aminoacyl-tRNA synthetase family. Requires Zn(2+) as cofactor.

It localises to the cytoplasm. It carries out the reaction tRNA(Ala) + L-alanine + ATP = L-alanyl-tRNA(Ala) + AMP + diphosphate. In terms of biological role, catalyzes the attachment of alanine to tRNA(Ala) in a two-step reaction: alanine is first activated by ATP to form Ala-AMP and then transferred to the acceptor end of tRNA(Ala). Also edits incorrectly charged Ser-tRNA(Ala) and Gly-tRNA(Ala) via its editing domain. The protein is Alanine--tRNA ligase of Brucella abortus (strain 2308).